A 184-amino-acid polypeptide reads, in one-letter code: Dirigent protein 13 (184 aa).

The first 25 residues, 1–25, serve as a signal peptide directing secretion; that stretch reads MANQIYIISLIFLSVLLYQSTTVLS. An intrachain disulfide couples Cys-36 to Cys-182. Residues Asn-55 and Asn-119 are each glycosylated (N-linked (GlcNAc...) asparagine).

Belongs to the plant dirigent protein family. As to quaternary structure, homodimer. As to expression, expressed in root vasculature and meristems, cotyledons, flowers, siliques, and leaf trichomes. Localized in the interfascicular/vascular cambia and developing xylem.

It is found in the secreted. It localises to the extracellular space. The protein localises to the apoplast. In terms of biological role, dirigent proteins impart stereoselectivity on the phenoxy radical-coupling reaction, yielding optically active lignans from two molecules of coniferyl alcohol in the biosynthesis of lignans, flavonolignans, and alkaloids and thus plays a central role in plant secondary metabolism. This chain is Dirigent protein 13 (DIR13), found in Arabidopsis thaliana (Mouse-ear cress).